A 198-amino-acid chain; its full sequence is Superoxide dismutase [Fe] (198 aa).

4 residues coordinate Fe cation: His-27, His-74, Asp-158, and His-162.

It belongs to the iron/manganese superoxide dismutase family. Homodimer. Requires Fe cation as cofactor.

It is found in the cytoplasm. The enzyme catalyses 2 superoxide + 2 H(+) = H2O2 + O2. Functionally, destroys superoxide anion radicals which are normally produced within the cells and which are toxic to biological systems. The protein is Superoxide dismutase [Fe] (SODB) of Plasmodium malariae.